Here is a 203-residue protein sequence, read N- to C-terminus: Holliday junction branch migration complex subunit RuvA (203 aa).

Residues 1 to 64 (MIGRLRGIVL…EDAQLLFGFN (64 aa)) form a domain I region. A domain II region spans residues 65-142 (NKQERTLFRE…KGLHGDLFTP (78 aa)). Residues 143–154 (AADLVLTSPASP) form a flexible linker region. The domain III stretch occupies residues 155 to 203 (AVDDAEAEAVAALVSLGYKPQEASRMVSKVAQADASSETLIREALRAAL).

It belongs to the RuvA family. In terms of assembly, homotetramer. Forms an RuvA(8)-RuvB(12)-Holliday junction (HJ) complex. HJ DNA is sandwiched between 2 RuvA tetramers; dsDNA enters through RuvA and exits via RuvB. An RuvB hexamer assembles on each DNA strand where it exits the tetramer. Each RuvB hexamer is contacted by two RuvA subunits (via domain III) on 2 adjacent RuvB subunits; this complex drives branch migration. In the full resolvosome a probable DNA-RuvA(4)-RuvB(12)-RuvC(2) complex forms which resolves the HJ.

It is found in the cytoplasm. In terms of biological role, the RuvA-RuvB-RuvC complex processes Holliday junction (HJ) DNA during genetic recombination and DNA repair, while the RuvA-RuvB complex plays an important role in the rescue of blocked DNA replication forks via replication fork reversal (RFR). RuvA specifically binds to HJ cruciform DNA, conferring on it an open structure. The RuvB hexamer acts as an ATP-dependent pump, pulling dsDNA into and through the RuvAB complex. HJ branch migration allows RuvC to scan DNA until it finds its consensus sequence, where it cleaves and resolves the cruciform DNA. The chain is Holliday junction branch migration complex subunit RuvA from Cronobacter sakazakii (strain ATCC BAA-894) (Enterobacter sakazakii).